The sequence spans 667 residues: YTH domain-containing protein ECT2 (667 aa).

2 disordered regions span residues 264-305 and 379-398; these read QRPV…PSSV and NELN…GNLD. Positions 267–285 are enriched in low complexity; the sequence is VSGSGVASSYSKSSTVPSS. A compositionally biased stretch (polar residues) spans 286–305; that stretch reads RNQNYRSNSHYTSVHQPSSV. The region spanning 442–579 is the YTH domain; that stretch reads AMFFIIKSYS…EQGLKIVKIF (138 aa). RNA-binding positions include 448–450, Asp-454, 464–465, Asn-497, Trp-521, Trp-526, and Trp-534; these read KSY and WA. The disordered stretch occupies residues 606–667; that stretch reads KAKQTQKQVS…VTGDVVANGC (62 aa). Positions 614 to 627 are enriched in basic and acidic residues; it reads VSEEKVTDEKKESA. The span at 628–639 shows a compositional bias: low complexity; that stretch reads TAESASKESPAA.

In terms of assembly, interacts (via C-terminus) with CIPK1. As to expression, expressed in the shoot apex, at the sites of leaf formation, and in emerging leaves. Highly expressed in rapidly developing tissues.

It localises to the cytoplasm. The protein localises to the nucleus. Its function is as follows. Specifically recognizes and binds N6-methyladenosine (m6A)-containing RNAs, and regulates mRNA stability. M6A is a modification present at internal sites of mRNAs and some non-coding RNAs and plays a role in mRNA stability and processing. Binds preferentially in the 3'UTRs of target genes. May play dual roles in regulating 3'UTR processing in the nucleus and facilitating mRNA stability in the cytoplasm. Required for the correct timing of leaf formation and normal leaf morphology. Functions redundantly with ECT3. Required for proper trichome branching and morphology. Controls trichome morphology by binding transcripts related to trichome morphogenesis and affecting their stability. The sequence is that of YTH domain-containing protein ECT2 from Arabidopsis thaliana (Mouse-ear cress).